The primary structure comprises 542 residues: MYIQLLCFFLFLFLLLQATMSKRSFKKFVEQELGSLPHFLIYTVLEWSLIVFLFIDGVIAFLSNQFAKFFDLNIPCLLCTRIDHILVPRDPQFYYNESICDSHKKKVSSLAYCHVHKKLSEIKHMCEGCLLSFATEKDSDCDTYKSLIGILHKDLELLIDDERDLPLAFKKDDNLVQTTKNLVDYKTNNIKNDSLKQHCSCCGELLKIKSEKLPKNNNSFLAPAPSPRVSHNKLSENESEFKDMDVDRTPSFVRGGNKFFGIPLSDSAQNSPRWSVRSLKKSVLNKTENASDTTDPTGESILNQLKKEVRLDKKSLIDLYMELDEERSASAVAANEAMAMITRLQAEKAAVQMEALQYQRMMDEQAEYDQEALQSMSSELAKREEEMKELEAEFEVYREKYGCLTDQEDAREEFHKQNGNASAYDDCQETKPVSDLAVSSSNQQENGENIDQNGQSKRSEESTAENVVSADEEKGSESKEGIVKELSEITERLSTLQSNGDLLKHIADVLDVSEGEAILLQISQNLHMLRSFVAMPSESMNL.

Residues 1–21 form the signal peptide; that stretch reads MYIQLLCFFLFLFLLLQATMS. The helical transmembrane segment at 39–59 threads the bilayer; that stretch reads FLIYTVLEWSLIVFLFIDGVI. The segment at 219 to 239 is disordered; the sequence is SFLAPAPSPRVSHNKLSENES. In terms of domain architecture, GTD-binding spans 300–398; it reads SILNQLKKEV…ELEAEFEVYR (99 aa). Positions 419 to 480 are disordered; sequence GNASAYDDCQ…DEEKGSESKE (62 aa). The span at 437 to 456 shows a compositional bias: polar residues; the sequence is AVSSSNQQENGENIDQNGQS. The segment covering 471–480 has biased composition (basic and acidic residues); the sequence is DEEKGSESKE.

The protein resides in the membrane. Functionally, probable membrane-anchored myosin receptors. The protein is Probable myosin-binding protein 6 of Arabidopsis thaliana (Mouse-ear cress).